The primary structure comprises 451 residues: KNR4/SMI1 homolog 1 (451 aa).

Residues 410–422 show a composition bias toward polar residues; that stretch reads ENQIAGGSDNAKN. Residues 410–451 form a disordered region; sequence ENQIAGGSDNAKNQVKLGETSDTKQDDTSKIASTVSTSDEDE. The span at 428–438 shows a compositional bias: basic and acidic residues; that stretch reads ETSDTKQDDTS. A compositionally biased stretch (polar residues) spans 439 to 451; that stretch reads KIASTVSTSDEDE.

This sequence belongs to the KNR4/SMI1 family.

In Debaryomyces hansenii (strain ATCC 36239 / CBS 767 / BCRC 21394 / JCM 1990 / NBRC 0083 / IGC 2968) (Yeast), this protein is KNR4/SMI1 homolog 1.